We begin with the raw amino-acid sequence, 390 residues long: RNA polymerase sigma factor SigA (390 aa).

Residues 48 to 57 (FLEPQTDEDD) show a composition bias toward acidic residues. The interval 48–75 (FLEPQTDEDDAKSGKAAKSRRRTQSKKK) is disordered. Residues 62–75 (KAAKSRRRTQSKKK) show a composition bias toward basic residues. Positions 158–228 (MVQSNLRLVV…TRAIADQSRT (71 aa)) are sigma-70 factor domain-2. The Interaction with polymerase core subunit RpoC motif lies at 182-185 (DLIQ). Residues 237–312 (ETISRIKKTT…ESDGETPEDQ (76 aa)) are sigma-70 factor domain-3. Residues 325-378 (VLDSLSPRERDVLRLRYGLDDGRMKTLEEIGQIFNVTRERIRQIEAKALRKLRH) are sigma-70 factor domain-4. The H-T-H motif DNA-binding region spans 351–370 (LEEIGQIFNVTRERIRQIEA).

It belongs to the sigma-70 factor family. RpoD/SigA subfamily. In terms of assembly, interacts transiently with the RNA polymerase catalytic core.

It is found in the cytoplasm. Sigma factors are initiation factors that promote the attachment of RNA polymerase to specific initiation sites and are then released. This sigma factor is the primary sigma factor during exponential growth. This is RNA polymerase sigma factor SigA from Nostoc sp. (strain PCC 7120 / SAG 25.82 / UTEX 2576).